We begin with the raw amino-acid sequence, 121 residues long: Large ribosomal subunit protein bL20 (121 aa).

Belongs to the bacterial ribosomal protein bL20 family.

Its function is as follows. Binds directly to 23S ribosomal RNA and is necessary for the in vitro assembly process of the 50S ribosomal subunit. It is not involved in the protein synthesizing functions of that subunit. The polypeptide is Large ribosomal subunit protein bL20 (Roseobacter denitrificans (strain ATCC 33942 / OCh 114) (Erythrobacter sp. (strain OCh 114))).